The sequence spans 239 residues: MRVHFVVHESFESAGAYLKWAEDRGYTISWSRVYAGEALPPNADEFDMLVVFGGPQSPRTTREECPYFDSRAEQHLINQAVTARRMVIGICLGSQLIGEALGAAVCQSPEKEIGHYPITLTEAGLRHPLIAHFGSPLTVGHWHNDMPGLTDQATVLAESEGCPRQIVQYGNFVYGFQCHMEFTVEAVEGLIQHSQQELADAQGKRFIRSVAEMRAWNYQQMNEKLWRFLDELTLAHSQK.

Residues 1–200 (MRVHFVVHES…IQHSQQELAD (200 aa)) enclose the Glutamine amidotransferase type-1 domain.

In Salmonella typhimurium (strain LT2 / SGSC1412 / ATCC 700720), this protein is Putative glutamine amidotransferase-like protein YfeJ (yfeJ).